We begin with the raw amino-acid sequence, 869 residues long: Translation initiation factor IF-2 (869 aa).

Disordered regions lie at residues lysine 51–lysine 78 and glutamate 105–lysine 277. The span at glutamine 67–methionine 76 shows a compositional bias: polar residues. A compositionally biased stretch (low complexity) spans arginine 110–leucine 119. Basic and acidic residues predominate over residues glutamate 120–valine 241. Positions serine 369–threonine 542 constitute a tr-type G domain. Residues glycine 378–threonine 385 form a G1 region. A GTP-binding site is contributed by glycine 378–threonine 385. The interval glycine 403–histidine 407 is G2. The segment at aspartate 424–glycine 427 is G3. GTP contacts are provided by residues aspartate 424–histidine 428 and asparagine 478–aspartate 481. The tract at residues asparagine 478–aspartate 481 is G4. Residues serine 514–lysine 516 are G5.

This sequence belongs to the TRAFAC class translation factor GTPase superfamily. Classic translation factor GTPase family. IF-2 subfamily.

It localises to the cytoplasm. In terms of biological role, one of the essential components for the initiation of protein synthesis. Protects formylmethionyl-tRNA from spontaneous hydrolysis and promotes its binding to the 30S ribosomal subunits. Also involved in the hydrolysis of GTP during the formation of the 70S ribosomal complex. The chain is Translation initiation factor IF-2 from Pseudoalteromonas atlantica (strain T6c / ATCC BAA-1087).